We begin with the raw amino-acid sequence, 418 residues long: Tyrosine--tRNA ligase (418 aa).

Position 34 (Tyr-34) interacts with L-tyrosine. A 'HIGH' region motif is present at residues Pro-39–His-48. Positions 169 and 173 each coordinate L-tyrosine. The 'KMSKS' region signature appears at Lys-229–Ser-233. ATP is bound at residue Lys-232. Positions Leu-352–Tyr-418 constitute an S4 RNA-binding domain.

The protein belongs to the class-I aminoacyl-tRNA synthetase family. TyrS type 1 subfamily. As to quaternary structure, homodimer.

Its subcellular location is the cytoplasm. It catalyses the reaction tRNA(Tyr) + L-tyrosine + ATP = L-tyrosyl-tRNA(Tyr) + AMP + diphosphate + H(+). Functionally, catalyzes the attachment of tyrosine to tRNA(Tyr) in a two-step reaction: tyrosine is first activated by ATP to form Tyr-AMP and then transferred to the acceptor end of tRNA(Tyr). This Streptococcus pyogenes serotype M3 (strain SSI-1) protein is Tyrosine--tRNA ligase.